The following is a 654-amino-acid chain: Translation factor GUF1, mitochondrial (654 aa).

One can recognise a tr-type G domain in the interval 57-237 (ENYRNFSIVA…SVIKNIPSPV (181 aa)). GTP is bound by residues 66-73 (AHVDHGKS), 130-134 (DTPGH), and 184-187 (NKID).

Belongs to the TRAFAC class translation factor GTPase superfamily. Classic translation factor GTPase family. LepA subfamily.

The protein resides in the mitochondrion inner membrane. The enzyme catalyses GTP + H2O = GDP + phosphate + H(+). In terms of biological role, promotes mitochondrial protein synthesis. May act as a fidelity factor of the translation reaction, by catalyzing a one-codon backward translocation of tRNAs on improperly translocated ribosomes. Binds to mitochondrial ribosomes in a GTP-dependent manner. The chain is Translation factor GUF1, mitochondrial from Candida dubliniensis (strain CD36 / ATCC MYA-646 / CBS 7987 / NCPF 3949 / NRRL Y-17841) (Yeast).